A 256-amino-acid polypeptide reads, in one-letter code: Membrane-anchored junction protein (256 aa).

Topologically, residues 1–232 (MSLKPFTYPF…HSSPPPPKEP (232 aa)) are nuclear. 2 disordered regions span residues 143–197 (KRKL…TPAS) and 211–235 (HGLQ…PGAR). Polar residues predominate over residues 164–173 (ETSSEASSNK). The segment covering 175-184 (PLKESKRSTD) has biased composition (basic and acidic residues). Residues 233-251 (GARGFLGFLSALFPFRYFF) traverse the membrane as a helical segment. At 252–256 (KKSGQ) the chain is on the perinuclear space side.

Belongs to the MAJIN family. In terms of assembly, component of the MAJIN-TERB1-TERB2 complex, composed of MAJIN, TERB1 and TERB2. As to expression, specifically expressed in germline tissues.

Its subcellular location is the nucleus inner membrane. The protein resides in the chromosome. It is found in the telomere. In terms of biological role, meiosis-specific telomere-associated protein involved in meiotic telomere attachment to the nucleus inner membrane, a crucial step for homologous pairing and synapsis. Component of the MAJIN-TERB1-TERB2 complex, which promotes telomere cap exchange by mediating attachment of telomeric DNA to the inner nuclear membrane and replacement of the protective cap of telomeric chromosomes: in early meiosis, the MAJIN-TERB1-TERB2 complex associates with telomeric DNA and the shelterin/telosome complex. During prophase, the complex matures and promotes release of the shelterin/telosome complex from telomeric DNA. In the complex, MAJIN acts as the anchoring subunit to the nucleus inner membrane. MAJIN shows DNA-binding activity, possibly for the stabilization of telomere attachment on the nucleus inner membrane. This chain is Membrane-anchored junction protein, found in Mus musculus (Mouse).